Reading from the N-terminus, the 431-residue chain is Glutamate-1-semialdehyde 2,1-aminomutase (431 aa).

N6-(pyridoxal phosphate)lysine is present on lysine 266.

This sequence belongs to the class-III pyridoxal-phosphate-dependent aminotransferase family. HemL subfamily. As to quaternary structure, homodimer. Pyridoxal 5'-phosphate serves as cofactor.

It localises to the cytoplasm. It carries out the reaction (S)-4-amino-5-oxopentanoate = 5-aminolevulinate. It participates in porphyrin-containing compound metabolism; protoporphyrin-IX biosynthesis; 5-aminolevulinate from L-glutamyl-tRNA(Glu): step 2/2. In Wolinella succinogenes (strain ATCC 29543 / DSM 1740 / CCUG 13145 / JCM 31913 / LMG 7466 / NCTC 11488 / FDC 602W) (Vibrio succinogenes), this protein is Glutamate-1-semialdehyde 2,1-aminomutase.